An 85-amino-acid chain; its full sequence is U4-theraphotoxin-Hhn1w (85 aa).

Residues 1 to 22 (MKVTLIAILTCAAVLALHTTAA) form the signal peptide. Residues 23 to 48 (EELEAESQLMEVGMPDTELAAVDEER) constitute a propeptide that is removed on maturation. Cystine bridges form between cysteine 52/cysteine 66, cysteine 56/cysteine 77, and cysteine 71/cysteine 82.

It belongs to the neurotoxin 12 (Hwtx-2) family. 02 (Hwtx-2) subfamily. Expressed by the venom gland.

The protein localises to the secreted. Functionally, postsynaptic neurotoxin. This is U4-theraphotoxin-Hhn1w from Cyriopagopus hainanus (Chinese bird spider).